Consider the following 2283-residue polypeptide: Serine-rich adhesin for platelets (2283 aa).

A signal peptide spans 1–89 (MSKRQKAFHD…VNMLHDQQAF (89 aa)). Positions 90–230 (AASDAPLTSE…KTSTTSTSTA (141 aa)) are serine-rich repeat region 1, SRR1. Residues 100–111 (LNTQSETVGNQN) show a composition bias toward polar residues. Disordered stretches follow at residues 100–230 (LNTQ…TSTA), 691–721 (NSGNAVTNKSTGLPSGLTFDSTNNTISGTPT), and 751–2255 (NSMS…GLLG). Residues 112–128 (STTIEASTSTADSTSVT) are compositionally biased toward low complexity. Polar residues predominate over residues 129-140 (KNSSSVQTSNSD). Low complexity predominate over residues 149–229 (NVTSTTNSTS…NKTSTTSTST (81 aa)). Residues 231-751 (PVKLRTFSRL…TTFKYEVTRN (521 aa)) are non-repeat region (NRR). Composition is skewed to low complexity over residues 752–1323 (SMSD…SDSI), 1330–1894 (SLSA…QSSS), and 1901–2225 (DSMS…SATS). The segment at 752–2244 (SMSDSVSTSG…AQSEERLPDT (1493 aa)) is serine-rich repeat region 2, SRR2. Positions 2241-2245 (LPDTG) match the LPXTG sorting signal motif. T2244 carries the post-translational modification Pentaglycyl murein peptidoglycan amidated threonine. The propeptide at 2245–2283 (GESIKQNGLLGGIMTLLVGLGLMKRKKKKDENDQDDSQA) is removed by sortase.

Belongs to the serine-rich repeat protein (SRRP) family. In terms of processing, proteolytically cleaved by a metalloprotease. Post-translationally, glycosylated. It is probable that most of the Ser residues in SSR1 and SSR2 are O-GlcNAcylated. Sequential glycosylation by sugar transferases are able to generate complex sugar polymorphisms.

Its subcellular location is the secreted. The protein localises to the cell wall. Functionally, mediates binding to human platelets, possibly through a receptor-ligand interaction. Probably associated with virulence in endovascular infection. The sequence is that of Serine-rich adhesin for platelets (sraP) from Staphylococcus aureus.